A 117-amino-acid polypeptide reads, in one-letter code: Large ribosomal subunit protein bL20 (117 aa).

This sequence belongs to the bacterial ribosomal protein bL20 family.

Functionally, binds directly to 23S ribosomal RNA and is necessary for the in vitro assembly process of the 50S ribosomal subunit. It is not involved in the protein synthesizing functions of that subunit. The polypeptide is Large ribosomal subunit protein bL20 (Vibrio cholerae serotype O1 (strain ATCC 39541 / Classical Ogawa 395 / O395)).